A 277-amino-acid polypeptide reads, in one-letter code: Putative hydroxypyruvate isomerase (277 aa).

Residues Glu-150 and Glu-249 each act as proton donor/acceptor in the active site.

Belongs to the hyi family.

It catalyses the reaction 3-hydroxypyruvate = 2-hydroxy-3-oxopropanoate. Catalyzes the reversible isomerization between hydroxypyruvate and 2-hydroxy-3-oxopropanoate (also termed tartronate semialdehyde). This is Putative hydroxypyruvate isomerase (HYI) from Homo sapiens (Human).